The chain runs to 229 residues: ATP synthase subunit a 3 (229 aa).

6 helical membrane-spanning segments follow: residues 25 to 45 (ADAV…SFLA), 86 to 106 (VATI…PGFF), 111 to 131 (NINT…VVGI), 142 to 162 (FCGP…IGHL), 181 to 201 (LVLI…MMLM), and 202 to 222 (GVLV…IYIQ).

Belongs to the ATPase A chain family. As to quaternary structure, F-type ATPases have 2 components, CF(1) - the catalytic core - and CF(0) - the membrane proton channel. CF(1) has five subunits: alpha(3), beta(3), gamma(1), delta(1), epsilon(1). CF(0) has three main subunits: a(1), b(2) and c(9-12). The alpha and beta chains form an alternating ring which encloses part of the gamma chain. CF(1) is attached to CF(0) by a central stalk formed by the gamma and epsilon chains, while a peripheral stalk is formed by the delta and b chains.

The protein resides in the cell inner membrane. Its function is as follows. Key component of the proton channel; it plays a direct role in the translocation of protons across the membrane. In Pelobacter propionicus (strain DSM 2379 / NBRC 103807 / OttBd1), this protein is ATP synthase subunit a 3.